Consider the following 116-residue polypeptide: Flagellar transcriptional regulator FlhD (116 aa).

This sequence belongs to the FlhD family. In terms of assembly, homodimer; disulfide-linked. Forms a heterohexamer composed of two FlhC and four FlhD subunits. Each FlhC binds a FlhD dimer, forming a heterotrimer, and a hexamer assembles by dimerization of two heterotrimers.

It is found in the cytoplasm. Functionally, functions in complex with FlhC as a master transcriptional regulator that regulates transcription of several flagellar and non-flagellar operons by binding to their promoter region. Activates expression of class 2 flagellar genes, including fliA, which is a flagellum-specific sigma factor that turns on the class 3 genes. Also regulates genes whose products function in a variety of physiological pathways. This chain is Flagellar transcriptional regulator FlhD, found in Salmonella arizonae (strain ATCC BAA-731 / CDC346-86 / RSK2980).